The chain runs to 513 residues: Chromosomal replication initiator protein DnaA (513 aa).

A domain I, interacts with DnaA modulators region spans residues 1–87 (MSVELWQQCV…IGSKRSSAPR (87 aa)). Residues 87–176 (RAAPNAPLAA…QVEGALKHTS (90 aa)) form a domain II region. Residues 113-163 (AAPAPAPAPTSAPAKKAAAQKAAEVSEEPSRDSFDPMAGASSQQAPVRAEQ) are disordered. Over residues 123–135 (SAPAKKAAAQKAA) the composition is skewed to low complexity. A domain III, AAA+ region region spans residues 177 to 393 (YLNRTFTFEN…GALKRVIAHS (217 aa)). Residues Gly-221, Gly-223, Lys-224, and Thr-225 each contribute to the ATP site. The segment at 394–513 (HFMGRDITIE…YKNLLRTLTT (120 aa)) is domain IV, binds dsDNA.

This sequence belongs to the DnaA family. As to quaternary structure, oligomerizes as a right-handed, spiral filament on DNA at oriC.

It localises to the cytoplasm. Plays an essential role in the initiation and regulation of chromosomal replication. ATP-DnaA binds to the origin of replication (oriC) to initiate formation of the DNA replication initiation complex once per cell cycle. Binds the DnaA box (a 9 base pair repeat at the origin) and separates the double-stranded (ds)DNA. Forms a right-handed helical filament on oriC DNA; dsDNA binds to the exterior of the filament while single-stranded (ss)DNA is stabiized in the filament's interior. The ATP-DnaA-oriC complex binds and stabilizes one strand of the AT-rich DNA unwinding element (DUE), permitting loading of DNA polymerase. After initiation quickly degrades to an ADP-DnaA complex that is not apt for DNA replication. Binds acidic phospholipids. This Pseudomonas fluorescens (strain ATCC BAA-477 / NRRL B-23932 / Pf-5) protein is Chromosomal replication initiator protein DnaA.